Here is a 409-residue protein sequence, read N- to C-terminus: Testis-expressed protein 13A (409 aa).

Residues 92-408 (WLHGFAKLHK…CGKGIWLQKP (317 aa)) are required for repression of transcription. The interval 347-374 (GGPHRIDHQEHPRDRRYSEPHQQRPPVY) is disordered. Over residues 348 to 368 (GPHRIDHQEHPRDRRYSEPHQ) the composition is skewed to basic and acidic residues. A RanBP2-type zinc finger spans residues 376-400 (RPGDWDCPWCNAVNFSRRDTCFDCG). Zn(2+)-binding residues include Cys-382, Cys-385, Cys-396, and Cys-399.

Belongs to the TEX13 family. Interacts with CNOT1; the interaction may inhibit CNOT1 binding to mRNA and subsequently CNOT1-mediated mRNA degradation. In terms of tissue distribution, testis specific.

Its function is as follows. Binds to ssRNA containing the consensus sequence 5'-AGGUAA-3'. Plays a role in transcriptional repression. Required for rapid sperm motility and timely degradation of mRNA via its interaction with CNOT1. The protein is Testis-expressed protein 13A of Homo sapiens (Human).